A 223-amino-acid chain; its full sequence is AMSH-like ubiquitin thioesterase 2 (223 aa).

One can recognise an MPN domain in the interval 49–177 (VHISERLLED…YGIFKLTDPG (129 aa)). H127, H129, D140, H142, C185, H191, and H193 together coordinate Zn(2+). Positions 127 to 140 (HTHPSQGCFMSSVD) match the JAMM motif motif.

The protein belongs to the peptidase M67C family. The cofactor is Zn(2+).

Zinc metalloprotease that cleaves 'Lys-48'- and 'Lys-63'-linked polyubiquitin chains. In Arabidopsis thaliana (Mouse-ear cress), this protein is AMSH-like ubiquitin thioesterase 2 (AMSH2).